We begin with the raw amino-acid sequence, 461 residues long: MSPILTNRQAEELHKSIIAYLTANNLLDTANTLRAELNLNEDAFDPATAKKYETLLEKKWTSVVRLQKKIMDLESRMSAMQAELDNATPTSLSKRNKDPASWIPTAPARHALESHRDTINSVAFHPIFSSVASASDDCTIKIWDWELGELERTIKGHTRAVVDVDFGGPRGGILLASCSSDLSIKLWDPSNEYKNIRTLVGHDHSVSAVRFIPLGASGAPSSGNLLASASRDKSLKIWDANTGYCLRTLQGHTAWVRDVFPSPDGRFLLSTGDDSTARLWDISVSNPETKVTMFGHDHFNECCAIAPSTSYQYLSPLTGLKKPPPASSTAEFMATGSRDKKIKIWDARGTCLLTLAGHDNWIRALAFHPGGKYLFSVSDDRTLRCWDLSQEGKCIKVMRDAHERFITCLRWAPSIFKDAPTGNGASDGKNGDIKKSDSPEVQIRCVIATGGVDMKLRIFAN.

Residues 9 to 41 form the LisH domain; that stretch reads QAEELHKSIIAYLTANNLLDTANTLRAELNLNE. Residues 61 to 88 adopt a coiled-coil conformation; it reads TSVVRLQKKIMDLESRMSAMQAELDNAT. WD repeat units follow at residues 114-155, 157-197, 201-248, 251-290, 312-355, 357-396, 401-446, and 448-461; these read SHRD…RTIK, HTRA…KNIR, GHDH…CLRT, GHTAWVRDVFPSPDGRFLLSTGDDSTARLWDISVSNPETK, QYLS…LLTL, GHDNWIRALAFHPGGKYLFSVSDDRTLRCWDLSQEGKCIK, AHER…IRCV, and ATGGVDMKLRIFAN.

The protein belongs to the WD repeat LIS1/nudF family. In terms of assembly, self-associates. Interacts with NDL1 and dynein.

The protein resides in the cytoplasm. Its subcellular location is the cytoskeleton. It localises to the spindle pole. Functionally, positively regulates the activity of the minus-end directed microtubule motor protein dynein. May enhance dynein-mediated microtubule sliding by targeting dynein to the microtubule plus end. Required for nuclear migration during vegetative growth as well as development. Required for retrograde early endosome (EE) transport from the hyphal tip. Required for localization of dynein to the mitotic spindle poles. Recruits additional proteins to the dynein complex at SPBs. This is Nuclear distribution protein PAC1 from Arthroderma benhamiae (strain ATCC MYA-4681 / CBS 112371) (Trichophyton mentagrophytes).